Consider the following 356-residue polypeptide: MMDSRATYVPPKKISESNSNAEEDPTDCSKPITLKVPTVSETVLATIPHKPQRHLTVYLEGCVGVGKTTMFKYVVDNMFVHTAYDEPMDHWTKWFPENILQTIHEAVNLPTQEQHAYVFSCQNLIATSFLARESGIVKTHPAPFDPSVDVISIADRHALAAYVAFPIHHFLQGRFTYMELQCMLWAFKQDSVDTIFLLQGCSEETLRRVKRRNRKVEHGVTIEYINSLQAAYTVILSTWYRATEYQYSAKRTVSEEISFFIAGPRRTLFYILYDKRPITLPEIEILKLFRKISNDLKKLVLIPVNFQRLVYSSALRRLQDLLIVTPGVTSYIHNENVDTATCAVADNPHFNHHDVS.

The disordered stretch occupies residues 1 to 29; the sequence is MMDSRATYVPPKKISESNSNAEEDPTDCS. Residue 61–68 coordinates ATP; sequence GCVGVGKT. The active-site Proton acceptor is glutamate 86. Residue glutamine 122 coordinates substrate. Arginine 208 is a binding site for ATP. Arginine 214 contributes to the substrate binding site.

This sequence belongs to the herpesviridae thymidine kinase family. Homodimer.

It catalyses the reaction thymidine + ATP = dTMP + ADP + H(+). Its function is as follows. Catalyzes the transfer of the gamma-phospho group of ATP to thymidine to generate dTMP in the salvage pathway of pyrimidine synthesis. The dTMP serves as a substrate for DNA polymerase during viral DNA replication. Allows the virus to be reactivated and to grow in non-proliferative cells lacking a high concentration of phosphorylated nucleic acid precursors. This Elephas maximus (Indian elephant) protein is Thymidine kinase.